We begin with the raw amino-acid sequence, 359 residues long: Phosphoserine aminotransferase (359 aa).

Residue arginine 41 participates in L-glutamate binding. Residues 75-76 (AS), tryptophan 101, threonine 151, aspartate 171, and glutamine 194 contribute to the pyridoxal 5'-phosphate site. An N6-(pyridoxal phosphate)lysine modification is found at lysine 195. 236–237 (NT) is a binding site for pyridoxal 5'-phosphate.

This sequence belongs to the class-V pyridoxal-phosphate-dependent aminotransferase family. SerC subfamily. In terms of assembly, homodimer. Pyridoxal 5'-phosphate is required as a cofactor.

The protein resides in the cytoplasm. The enzyme catalyses O-phospho-L-serine + 2-oxoglutarate = 3-phosphooxypyruvate + L-glutamate. It carries out the reaction 4-(phosphooxy)-L-threonine + 2-oxoglutarate = (R)-3-hydroxy-2-oxo-4-phosphooxybutanoate + L-glutamate. It functions in the pathway amino-acid biosynthesis; L-serine biosynthesis; L-serine from 3-phospho-D-glycerate: step 2/3. It participates in cofactor biosynthesis; pyridoxine 5'-phosphate biosynthesis; pyridoxine 5'-phosphate from D-erythrose 4-phosphate: step 3/5. Its function is as follows. Catalyzes the reversible conversion of 3-phosphohydroxypyruvate to phosphoserine and of 3-hydroxy-2-oxo-4-phosphonooxybutanoate to phosphohydroxythreonine. The polypeptide is Phosphoserine aminotransferase (Thiobacillus denitrificans (strain ATCC 25259 / T1)).